A 123-amino-acid polypeptide reads, in one-letter code: Large ribosomal subunit protein uL14 (123 aa).

The protein belongs to the universal ribosomal protein uL14 family. As to quaternary structure, part of the 50S ribosomal subunit. Forms a cluster with proteins L3 and L19. In the 70S ribosome, L14 and L19 interact and together make contacts with the 16S rRNA in bridges B5 and B8.

In terms of biological role, binds to 23S rRNA. Forms part of two intersubunit bridges in the 70S ribosome. The polypeptide is Large ribosomal subunit protein uL14 (Yersinia pestis bv. Antiqua (strain Antiqua)).